The following is a 305-amino-acid chain: Porphobilinogen deaminase (305 aa).

An S-(dipyrrolylmethanemethyl)cysteine modification is found at cysteine 240.

The protein belongs to the HMBS family. As to quaternary structure, monomer. Dipyrromethane is required as a cofactor.

The catalysed reaction is 4 porphobilinogen + H2O = hydroxymethylbilane + 4 NH4(+). It functions in the pathway porphyrin-containing compound metabolism; protoporphyrin-IX biosynthesis; coproporphyrinogen-III from 5-aminolevulinate: step 2/4. Functionally, tetrapolymerization of the monopyrrole PBG into the hydroxymethylbilane pre-uroporphyrinogen in several discrete steps. The sequence is that of Porphobilinogen deaminase from Xylella fastidiosa (strain M23).